We begin with the raw amino-acid sequence, 1118 residues long: cGMP-specific 3',5'-cyclic phosphodiesterase (1118 aa).

Residues 1–142 form a disordered region; sequence MTDVSSPAGG…KASTTASQQD (142 aa). A compositionally biased stretch (low complexity) spans 18 to 33; the sequence is STTSSSSAATTSASSS. Residues 34-45 are compositionally biased toward polar residues; it reads KPLTNGANKTAI. Composition is skewed to low complexity over residues 46-56 and 63-72; these read STAAGGVTPGA and GAIPASSSSG. A compositionally biased stretch (polar residues) spans 84-101; the sequence is SNNNRPAVTNRSSETKLM. Residues 102-128 are compositionally biased toward low complexity; that stretch reads TPTGSSSSPSQSPSQTQASIQTQTSQQ. GAF domains are found at residues 247 to 399 and 431 to 612; these read DIDV…GIGI and NLEC…GLGI. Residues 642 to 965 form the PDEase domain; that stretch reads SQDQTEKLTQ…RNWQDLAEKV (324 aa). The active-site Proton donor is the histidine 718. Positions 722, 758, 759, and 869 each coordinate a divalent metal cation. 2 disordered regions span residues 1006-1035 and 1065-1118; these read QQSQ…TGAL and SHVS…CALL. 2 stretches are compositionally biased toward basic and acidic residues: residues 1011–1022 and 1065–1075; these read GSEDSHTPEHQR and SHVSEDMDDKS. A compositionally biased stretch (low complexity) spans 1084-1104; that stretch reads ASGSMGRMSASSSTSSAGGQM. The span at 1108–1118 shows a compositional bias: basic residues; the sequence is SKKRSKLCALL. Cysteine 1115 is modified (cysteine methyl ester). Residue cysteine 1115 is the site of S-farnesyl cysteine attachment. The propeptide at 1116-1118 is removed in mature form; sequence ALL.

The protein belongs to the cyclic nucleotide phosphodiesterase family. In terms of assembly, interacts with PrBP. The cofactor is a divalent metal cation. Expressed in Malpighian tubule principal cells. Also expressed in adult head.

The protein resides in the cell membrane. It carries out the reaction 3',5'-cyclic GMP + H2O = GMP + H(+). With respect to regulation, inhibited by sildenafil and zaprinast. Its function is as follows. Hydrolyzes the second messenger cGMP, which is a key regulator of many important physiological processes. Has cAMP phosphodiesterase activity in vitro but not in vivo. Has a role regulating cGMP transport in Malpighian tubule principal cells. The polypeptide is cGMP-specific 3',5'-cyclic phosphodiesterase (Pde6) (Drosophila melanogaster (Fruit fly)).